Consider the following 124-residue polypeptide: Salivary protein 15 Iric-3 (124 aa).

An N-terminal signal peptide occupies residues 1-22 (MESFVAMKVVCIILLFVIAAEA). N-linked (GlcNAc...) asparagine glycosylation is found at Asn82 and Asn93. The CD4-binding stretch occupies residues 105-124 (GPNNQTCHKKDECVGYIPGC).

This sequence belongs to the salp15 family. As to quaternary structure, interacts with host CD4. Interacts with host DC-SIGN (CD209). Interacts with Borrelia outer surface protein C (OspC). In terms of tissue distribution, expressed in salivary glands. Detected in fed adult female.

The protein resides in the secreted. Its function is as follows. Salivary tick protein that downregulates host immune system by binding to both dendritic cells, and CD4(+) T cells. Specifically binds to the CD4 coreceptor on T cells. This interaction prevents the activation of the Src kinase, Lck, and its downstream substrate Zap-70, and results in deficient activation of PLCgamma1, the repression of calcium fluxes triggered by T-cell antigen receptor (TCR) ligation, and a subsequent reduction in interleukin-2 production. This salivary protein also binds to DC-SIGN (CD209) on dendritic cells (DC) and activates the Raf-1 kinase/MEK signaling pathway that results in down-regulating expression of pro-inflammatory cytokines. Furthermore, it inhibits T cell proliferation induced by DCs. In addition, it inhibits in vitro keratinocyte inflammation induced by Borrelia burgdorferi or by the major outer surface protein (OspC) of Borrelia. In addition, it downregulates chemokines and monocyte chemoattractant protein 1, as well as several antimicrobial peptides such as defensins, cathelicidin, psoriasin, and RNase 7. Apart from its immunomodulatory activities, it is also associated with protection of Borrelia spirochetes from antibody-mediated killing through its binding to OspC. In vivo, tests on different immune disease animal models show promising therapeutic results, e.g., in inhibiting HIV infection, experimental autoimmune encephalomyelitis, transplantation rejection, and asthma. This Ixodes ricinus (Common tick) protein is Salivary protein 15 Iric-3.